The following is a 133-amino-acid chain: Interleukin-5 (133 aa).

The N-terminal stretch at 1–20 (MRRMLLHLSVLTLSCVWATA) is a signal peptide. N-linked (GlcNAc...) asparagine glycosylation is found at Asn46, Asn75, and Asn89.

The protein belongs to the IL-5 family. As to quaternary structure, homodimer; disulfide-linked. Interacts with IL5RA. Interacts with CSF2RB. As to expression, expressed in lymphoid cells, including spleen, thymus, lymph nodes and peripheral blood mononuclear cells.

The protein localises to the secreted. Its function is as follows. Homodimeric cytokine expressed predominantly by T-lymphocytes and NK cells that plays an important role in the survival, differentiation, and chemotaxis of eosinophils. Also acts on activated and resting B-cells to induce immunoglobulin production, growth, and differentiation. Mechanistically, exerts its biological effects through a receptor composed of IL5RA subunit and the cytokine receptor common subunit beta/CSF2RB. Binding to the receptor leads to activation of various kinases including LYN, SYK and JAK2 and thereby propagates signals through the RAS-MAPK and JAK-STAT5 pathways respectively. The chain is Interleukin-5 (Il5) from Mus musculus (Mouse).